A 983-amino-acid polypeptide reads, in one-letter code: Bifunctional glutamine synthetase adenylyltransferase/adenylyl-removing enzyme (983 aa).

The adenylyl removase stretch occupies residues 1-468 (MTVENAKALF…KQYAALFAQA (468 aa)). The tract at residues 473–983 (AASGNLVFTG…FDKLVGHGAD (511 aa)) is adenylyl transferase.

Belongs to the GlnE family. It depends on Mg(2+) as a cofactor.

It catalyses the reaction [glutamine synthetase]-O(4)-(5'-adenylyl)-L-tyrosine + phosphate = [glutamine synthetase]-L-tyrosine + ADP. It carries out the reaction [glutamine synthetase]-L-tyrosine + ATP = [glutamine synthetase]-O(4)-(5'-adenylyl)-L-tyrosine + diphosphate. In terms of biological role, involved in the regulation of glutamine synthetase GlnA, a key enzyme in the process to assimilate ammonia. When cellular nitrogen levels are high, the C-terminal adenylyl transferase (AT) inactivates GlnA by covalent transfer of an adenylyl group from ATP to specific tyrosine residue of GlnA, thus reducing its activity. Conversely, when nitrogen levels are low, the N-terminal adenylyl removase (AR) activates GlnA by removing the adenylyl group by phosphorolysis, increasing its activity. The regulatory region of GlnE binds the signal transduction protein PII (GlnB) which indicates the nitrogen status of the cell. In Brucella suis biovar 1 (strain 1330), this protein is Bifunctional glutamine synthetase adenylyltransferase/adenylyl-removing enzyme.